Reading from the N-terminus, the 386-residue chain is Innexin unc-9 (386 aa).

4 helical membrane passes run threonine 33–isoleucine 53, glutamine 103–tryptophan 123, phenylalanine 197–leucine 217, and isoleucine 282–phenylalanine 302.

Belongs to the pannexin family. As to quaternary structure, heterooligomer of unc-7 and unc-9. Interacts with F-actin. As to expression, expressed in PLM neurons (at protein level). Expressed in the nerve ring.

It is found in the cell membrane. The protein resides in the cell junction. The protein localises to the gap junction. Functionally, structural component of gap junctions. Plays a role in maintaining gap junction activity to promote locomotion. This chain is Innexin unc-9, found in Caenorhabditis elegans.